Reading from the N-terminus, the 329-residue chain is Phenylalanine--tRNA ligase alpha subunit (329 aa).

Glu-254 lines the Mg(2+) pocket.

It belongs to the class-II aminoacyl-tRNA synthetase family. Phe-tRNA synthetase alpha subunit type 1 subfamily. In terms of assembly, tetramer of two alpha and two beta subunits. Mg(2+) serves as cofactor.

Its subcellular location is the cytoplasm. It catalyses the reaction tRNA(Phe) + L-phenylalanine + ATP = L-phenylalanyl-tRNA(Phe) + AMP + diphosphate + H(+). In Actinobacillus succinogenes (strain ATCC 55618 / DSM 22257 / CCUG 43843 / 130Z), this protein is Phenylalanine--tRNA ligase alpha subunit.